Here is a 99-residue protein sequence, read N- to C-terminus: uncharacterized protein (99 aa).

2 disordered regions span residues 1–24 and 49–99; these read MKATRRTRVASERGVRRRRRVRAT and SVRT…RCAT. Composition is skewed to basic residues over residues 15–24 and 71–81; these read VRRRRRVRAT and SRRRGRPRSSR.

This is an uncharacterized protein from Streptomyces fradiae (Streptomyces roseoflavus).